The chain runs to 340 residues: Phosphate acyltransferase (340 aa).

A disordered region spans residues 285-340 (WRQSGRPARHRGQEPRRHRQPRFWLCHRRGRRRSPRQRNRTHPGTGQPPAGCAGAR). Residues 300–325 (RRHRQPRFWLCHRRGRRRSPRQRNRT) show a composition bias toward basic residues.

This sequence belongs to the PlsX family. In terms of assembly, homodimer. Probably interacts with PlsY.

Its subcellular location is the cytoplasm. The catalysed reaction is a fatty acyl-[ACP] + phosphate = an acyl phosphate + holo-[ACP]. It participates in lipid metabolism; phospholipid metabolism. In terms of biological role, catalyzes the reversible formation of acyl-phosphate (acyl-PO(4)) from acyl-[acyl-carrier-protein] (acyl-ACP). This enzyme utilizes acyl-ACP as fatty acyl donor, but not acyl-CoA. The polypeptide is Phosphate acyltransferase (Laribacter hongkongensis (strain HLHK9)).